A 180-amino-acid polypeptide reads, in one-letter code: Cell division protein SepF (180 aa).

The disordered stretch occupies residues 14–81; it reads NSEDDEEFDN…SKITPISKSS (68 aa). A compositionally biased stretch (acidic residues) spans 15–35; it reads SEDDEEFDNEDYYLDDEEEEE. Residues 57–68 show a composition bias toward basic and acidic residues; the sequence is TRRDTTPKEKPV. Residues 69-79 are compositionally biased toward low complexity; the sequence is KTTSKITPISK.

The protein belongs to the SepF family. In terms of assembly, homodimer. Interacts with FtsZ.

Its subcellular location is the cytoplasm. Cell division protein that is part of the divisome complex and is recruited early to the Z-ring. Probably stimulates Z-ring formation, perhaps through the cross-linking of FtsZ protofilaments. Its function overlaps with FtsA. The protein is Cell division protein SepF of Agathobacter rectalis (strain ATCC 33656 / DSM 3377 / JCM 17463 / KCTC 5835 / VPI 0990) (Eubacterium rectale).